A 299-amino-acid chain; its full sequence is GTPase Era (299 aa).

One can recognise an Era-type G domain in the interval 4 to 171; that stretch reads KSGFVAILGR…VDILSENLDE (168 aa). A G1 region spans residues 12–19; the sequence is GRPNVGKS. 12 to 19 is a binding site for GTP; that stretch reads GRPNVGKS. A G2 region spans residues 38–42; it reads QTTRN. The G3 stretch occupies residues 59–62; the sequence is DTPG. Residues 59 to 63 and 121 to 124 each bind GTP; these read DTPGI and NKID. Residues 121-124 form a G4 region; it reads NKID. Residues 150–152 form a G5 region; sequence ISA. Positions 202 to 280 constitute a KH type-2 domain; it reads TREEIPHSVA…FLETWVKVKK (79 aa).

This sequence belongs to the TRAFAC class TrmE-Era-EngA-EngB-Septin-like GTPase superfamily. Era GTPase family. Monomer.

Its subcellular location is the cytoplasm. The protein resides in the cell membrane. Its function is as follows. An essential GTPase that binds both GDP and GTP, with rapid nucleotide exchange. Plays a role in 16S rRNA processing and 30S ribosomal subunit biogenesis and possibly also in cell cycle regulation and energy metabolism. The polypeptide is GTPase Era (Streptococcus pneumoniae (strain P1031)).